The chain runs to 677 residues: Probable serine/threonine-protein kinase mkcF (677 aa).

The region spanning 1-58 (MLYLVATGDYKGPSENHLSFTKGQRIEFLERTENGFIKGKLDGKVGIFPSSLITIETR) is the SH3 domain. Positions 72-244 (TETKDDTGSI…SSSSSSTKRR (173 aa)) are disordered. Low complexity predominate over residues 79 to 94 (GSISSSTSTSTSSLTT). The segment covering 105–126 (GEQQPSTSTINGQSSSTSPILQ) has biased composition (polar residues). Positions 127–146 (SNGTTNTTTSSTSNNNIGDN) are enriched in low complexity. Residues 158-174 (TTSNHSKSASRLSVASF) show a composition bias toward polar residues. Residues 175-192 (STTTTATTTTTTTTTATS) show a composition bias toward low complexity. A compositionally biased stretch (basic and acidic residues) spans 209-224 (DKKSKDDDKSEKEGLY). Low complexity predominate over residues 230 to 240 (SSSSSSSSSSS). The Protein kinase domain maps to 401–646 (IKFTHMVGRG…VDKLMRHPFF (246 aa)). ATP-binding positions include 407–415 (VGRGQYGKV) and Lys-428. Asp-519 functions as the Proton acceptor in the catalytic mechanism.

This sequence belongs to the protein kinase superfamily. Ser/Thr protein kinase family. STE20 subfamily. It depends on Mg(2+) as a cofactor.

The catalysed reaction is L-seryl-[protein] + ATP = O-phospho-L-seryl-[protein] + ADP + H(+). It catalyses the reaction L-threonyl-[protein] + ATP = O-phospho-L-threonyl-[protein] + ADP + H(+). The chain is Probable serine/threonine-protein kinase mkcF from Dictyostelium discoideum (Social amoeba).